The sequence spans 175 residues: Protein-export protein SecB (175 aa).

Residues 154–175 (QQGGNNNGSDSGIILPPGTTRQ) are disordered.

Belongs to the SecB family. In terms of assembly, homotetramer, a dimer of dimers. One homotetramer interacts with 1 SecA dimer.

Its subcellular location is the cytoplasm. Functionally, one of the proteins required for the normal export of preproteins out of the cell cytoplasm. It is a molecular chaperone that binds to a subset of precursor proteins, maintaining them in a translocation-competent state. It also specifically binds to its receptor SecA. This Bordetella petrii (strain ATCC BAA-461 / DSM 12804 / CCUG 43448) protein is Protein-export protein SecB.